The sequence spans 206 residues: Repetitive proline-rich cell wall protein 1 (206 aa).

Positions 1 to 22 (MASSNFLVLLLFALFAIPQGLA) are cleaved as a signal peptide. 33 tandem repeats follow at residues 32–36 (PPVYK), 37–41 (PPVEK), 42–46 (PPVYK), 47–51 (PPVEK), 52–56 (PPVYK), 57–61 (PPVEK), 62–66 (PPVYK), 67–71 (PPVYK), 72–76 (PPVYK), 77–81 (PPVVK), 82–86 (PPVYK), 87–91 (PPVYK), 92–96 (PPVYK), 97–101 (PPVYK), 102–106 (PPVEK), 107–111 (PPVYK), 112–116 (PPVYK), 117–121 (PPVVK), 122–126 (PPVYK), 127–131 (PPVYK), 132–136 (PPVEK), 137–141 (PPVYK), 142–146 (PPVVK), 147–151 (PPVYK), 152–156 (PPVYK), 157–161 (PPVVK), 162–166 (PPVYK), 167–171 (PPVYK), 172–176 (PPVYK), 177–181 (PPVEK), 182–186 (PPVYK), 187–191 (PPVYK), and 192–196 (PPVEK). The segment at 32–201 (PPVYKPPVEK…PPVEKPPVYG (170 aa)) is 34 X 5 AA approximate tandem repeats of P-P-V-[EVY]-K. The interval 51–84 (KPPVYKPPVEKPPVYKPPVYKPPVYKPPVVKPPV) is disordered. Residues 132–206 (PPVEKPPVYK…PPVYGPPHHP (75 aa)) are disordered. The stretch at 197–201 (PPVYG) is one 34; approximate repeat.

The protein belongs to the plant proline-rich protein superfamily. ENOD12 family. As to expression, expressed in hypocotyls, roots and mature root nodules.

The protein resides in the secreted. It localises to the cell wall. Functionally, this is a developmentally regulated putative cell wall protein. In Medicago truncatula (Barrel medic), this protein is Repetitive proline-rich cell wall protein 1 (PRP1).